Here is a 472-residue protein sequence, read N- to C-terminus: Major capsid protein (472 aa).

This sequence belongs to the NCLDV major capsid protein family. In terms of assembly, homotrimer. In terms of processing, the N-terminus is blocked.

The protein resides in the virion. Functionally, major capsid protein that self assembles to form an icosahedral capsid. Represents around 50% of the total virion protein mass. The polypeptide is Major capsid protein (MCP) (Simulium (IIV-22)).